The chain runs to 356 residues: Metacaspase-1 (356 aa).

Residues 1-47 (MYSGRSGAPPPAHSPYPNSYNHGPPGHSAGHNVPPPPPTQPVQFGHG) form a disordered region. Residues His147 and Cys203 contribute to the active site.

The protein belongs to the peptidase C14B family.

In terms of biological role, involved in cell death (apoptosis). The polypeptide is Metacaspase-1 (MCA1) (Ajellomyces capsulatus (strain NAm1 / WU24) (Darling's disease fungus)).